The primary structure comprises 104 residues: Large ribosomal subunit protein bL21 (104 aa).

Belongs to the bacterial ribosomal protein bL21 family. Part of the 50S ribosomal subunit. Contacts protein L20.

In terms of biological role, this protein binds to 23S rRNA in the presence of protein L20. The chain is Large ribosomal subunit protein bL21 from Moorella thermoacetica (strain ATCC 39073 / JCM 9320).